The chain runs to 269 residues: Eukaryotic translation initiation factor 3 subunit G-1 (269 aa).

The RRM domain occupies Ala188 to Pro266.

Belongs to the eIF-3 subunit G family. As to quaternary structure, component of the eukaryotic translation initiation factor 3 (eIF-3) complex. The eIF-3 complex interacts with pix.

Its subcellular location is the cytoplasm. In terms of biological role, RNA-binding component of the eukaryotic translation initiation factor 3 (eIF-3) complex, which is involved in protein synthesis of a specialized repertoire of mRNAs and, together with other initiation factors, stimulates binding of mRNA and methionyl-tRNAi to the 40S ribosome. The eIF-3 complex specifically targets and initiates translation of a subset of mRNAs involved in cell proliferation. This subunit can bind 18S rRNA. This Drosophila virilis (Fruit fly) protein is Eukaryotic translation initiation factor 3 subunit G-1.